Reading from the N-terminus, the 508-residue chain is Phenylalanine--tRNA ligase alpha subunit (508 aa).

The residue at position 2 (A2) is an N-acetylalanine. T190 carries the post-translational modification Phosphothreonine. A phosphoserine mark is found at S193 and S301. N6-acetyllysine is present on K311. L-phenylalanine contacts are provided by residues T329, 372–374 (QIE), and Y412. Mg(2+) is bound at residue E414. L-phenylalanine is bound at residue F438.

Belongs to the class-II aminoacyl-tRNA synthetase family. Phe-tRNA synthetase alpha subunit type 2 subfamily. In terms of assembly, heterotetramer; dimer of two heterodimers formed by FARSA and FARSB. It depends on Mg(2+) as a cofactor.

It localises to the cytoplasm. The enzyme catalyses tRNA(Phe) + L-phenylalanine + ATP = L-phenylalanyl-tRNA(Phe) + AMP + diphosphate + H(+). This chain is Phenylalanine--tRNA ligase alpha subunit (FARSA), found in Pongo abelii (Sumatran orangutan).